Consider the following 201-residue polypeptide: Glutathione peroxidase 1 (201 aa).

Serine 32 is modified (phosphoserine). Residue selenocysteine 47 is part of the active site. Selenocysteine 47 is a non-standard amino acid (selenocysteine). Residues lysine 86, lysine 112, and lysine 146 each carry the N6-acetyllysine; alternate modification. An N6-succinyllysine; alternate mark is found at lysine 86, lysine 112, and lysine 146. A phosphoserine mark is found at serine 195 and serine 199.

Belongs to the glutathione peroxidase family. In terms of assembly, homotetramer. Interacts with MIEN1. During periods of oxidative stress, Sec-47 may react with a superoxide radical, irreversibly lose hydroselenide and be converted to dehydroalanine.

It localises to the cytoplasm. It carries out the reaction 2 glutathione + H2O2 = glutathione disulfide + 2 H2O. The catalysed reaction is (12S)-hydroperoxy-(5Z,8Z,10E,14Z)-eicosatetraenoate + 2 glutathione = (12S)-hydroxy-(5Z,8Z,10E,14Z)-eicosatetraenoate + glutathione disulfide + H2O. In terms of biological role, protects the hemoglobin in erythrocytes from oxidative breakdown. In platelets, plays a crucial role of glutathione peroxidase in the arachidonic acid metabolism. The chain is Glutathione peroxidase 1 (GPX1) from Hylobates lar (Lar gibbon).